The sequence spans 360 residues: Ribosomal RNA small subunit methyltransferase C (360 aa).

It belongs to the methyltransferase superfamily. RsmC family. As to quaternary structure, monomer.

The protein localises to the cytoplasm. It catalyses the reaction guanosine(1207) in 16S rRNA + S-adenosyl-L-methionine = N(2)-methylguanosine(1207) in 16S rRNA + S-adenosyl-L-homocysteine + H(+). Functionally, specifically methylates the guanine in position 1207 of 16S rRNA in the 30S particle. This Alteromonas mediterranea (strain DSM 17117 / CIP 110805 / LMG 28347 / Deep ecotype) protein is Ribosomal RNA small subunit methyltransferase C.